We begin with the raw amino-acid sequence, 136 residues long: Secreted RxLR effector protein 10 (136 aa).

Positions 1-22 (MRVLNFVLTTTVVLLTSSEGIA) are cleaved as a signal peptide. Residues 42-56 (RSLRATENPGSDESR) carry the RxLR-dEER motif. The tract at residues 42-78 (RSLRATENPGSDESRLNEKDTGFDPDGSSSKEDEDIG) is disordered. Over residues 53–63 (DESRLNEKDTG) the composition is skewed to basic and acidic residues.

This sequence belongs to the RxLR effector family.

Its subcellular location is the secreted. It localises to the host cytoplasm. The protein localises to the host nucleus. In terms of biological role, effector that acts as a broad suppressor of cell death to interrupt plant immunity. Inhibits cell death induced by cell death-inducing proteins, including the PAMP elicitor INF1 from P.infestans. The protein is Secreted RxLR effector protein 10 of Plasmopara viticola (Downy mildew of grapevine).